A 312-amino-acid polypeptide reads, in one-letter code: Olfactory receptor 1J21 (312 aa).

7 consecutive transmembrane segments (helical) span residues 29–49 (ALFL…ILLI), 58–78 (PMYF…SVTA), 95–115 (AGCV…NFLL), 143–163 (LLVM…TLLF), 197–217 (LVIL…ILVS), 241–261 (CGSH…LYFF), and 272–292 (VIVA…IYSL).

It belongs to the G-protein coupled receptor 1 family.

It localises to the cell membrane. Odorant receptor. Activated by (+) and (-)-carvone. This chain is Olfactory receptor 1J21, found in Mus musculus (Mouse).